A 258-amino-acid chain; its full sequence is Phosphoprotein ECPP44 (258 aa).

Disordered regions lie at residues methionine 1 to leucine 25, glutamate 46 to valine 131, and lysine 148 to alanine 175. Composition is skewed to basic and acidic residues over residues serine 11–leucine 25, glutamate 46–histidine 80, glycine 109–aspartate 124, and lysine 148–glutamate 158.

It belongs to the plant dehydrin family. Post-translationally, phosphorylated in embryogenic and somatic embryos. Not phosphorylated in non-embryogenic cells.

Functionally, phosphorylation of ECCP44 protein is thought to be involved in the acquisition of embryogenic competence. Unlike other dehydrins, it is not thought to function as an environmental stress tolerant. This is Phosphoprotein ECPP44 (ECPP44) from Daucus carota (Wild carrot).